A 138-amino-acid polypeptide reads, in one-letter code: Small ribosomal subunit protein uS11c (138 aa).

The protein belongs to the universal ribosomal protein uS11 family. In terms of assembly, part of the 30S ribosomal subunit.

Its subcellular location is the plastid. It is found in the chloroplast. The polypeptide is Small ribosomal subunit protein uS11c (Acorus calamus (Sweet flag)).